Reading from the N-terminus, the 558-residue chain is Suppressor of zyg-1 protein 20 (558 aa).

The SUZ domain occupies 45–146; sequence KVKAEESSGV…ARNRILGTEY (102 aa). Disordered stretches follow at residues 50-132, 205-241, and 374-558; these read ESSG…ERQA, FTQP…QQSL, and QRNQ…NRPQ. Residues 69 to 81 are compositionally biased toward basic and acidic residues; sequence EEPKRVFLRRPKD. The span at 94–109 shows a compositional bias: polar residues; that stretch reads PPTSADTEEQPVTNVR. Residues 117-131 are compositionally biased toward basic and acidic residues; sequence NQKEKQPAPTYEERQ. 2 stretches are compositionally biased toward low complexity: residues 374-394 and 424-477; these read QRNQ…QNRQ and NNGQ…QQQQ. Composition is skewed to polar residues over residues 478 to 508 and 545 to 558; these read NKSG…SQNP and SASQ…NRPQ.

As to quaternary structure, interacts (via C-terminus) with atx-2 (via C-terminus); the interaction is RNA independent. Interacts with let-92. Post-translationally, phosphorylated. May be dephosphorylated by let-92.

Its subcellular location is the cytoplasm. It is found in the cytoskeleton. The protein localises to the microtubule organizing center. It localises to the centrosome. The protein resides in the centriole. Its subcellular location is the nucleus. It is found in the nucleolus. The protein localises to the chromosome. Functionally, RNA binding protein that is required for normal cell division and cytokinesis during embryonic development. Functions with RNA-binding protein atx-2 to ensure embryonic cell division, and to this end, plays a role in the regulation of centrosome assembly, position and size, and in astral microtubule outgrowth and nucleation. Furthermore, negatively regulates the levels of the protein kinase zyg-1 at the centrosome. Also involved in ensuring centrosome attachment to the nuclear envelope. This chain is Suppressor of zyg-1 protein 20, found in Caenorhabditis elegans.